A 1613-amino-acid polypeptide reads, in one-letter code: Myosin-IIIa (1613 aa).

Residues 21–287 (WEIIETIGKG…VSDLLKHKFI (267 aa)) form the Protein kinase domain. ATP is bound by residues 27 to 35 (IGKGTYGKV) and lysine 50. The Proton acceptor role is filled by aspartate 150. The Myosin motor domain occupies 338-1052 (KDVDDLATLD…HVEQLNLMRK (715 aa)). The actin-binding stretch occupies residues 933 to 955 (LMDLLSKMVVGQPHFVRCIKPNN). IQ domains follow at residues 1054 to 1083 (ATNK…KRKS) and 1081 to 1110 (RKSS…MKNT). Disordered stretches follow at residues 1136–1168 (VKKQ…TAPF) and 1476–1506 (SGVS…EDST). Low complexity predominate over residues 1145-1161 (PTNESNTSTPNNKESPS). The interaction with MORN4 stretch occupies residues 1398–1476 (EGVHHSKMVD…RHVSTHQYLS (79 aa)). Positions 1488–1497 (RPPRRPRKPK) are enriched in basic residues.

In the C-terminal section; belongs to the TRAFAC class myosin-kinesin ATPase superfamily. Myosin family. This sequence in the N-terminal section; belongs to the protein kinase superfamily. STE Ser/Thr protein kinase family. As to quaternary structure, interacts with MORN4. Interacts (via C-terminus) with ESPN and ESPNL. As to expression, expressed in the cochlear hair cells (at protein level). Expressed in utricle hair bundles (at protein level).

It localises to the cytoplasm. The protein resides in the cytoskeleton. Its subcellular location is the cell projection. It is found in the filopodium tip. The protein localises to the stereocilium. The catalysed reaction is L-seryl-[protein] + ATP = O-phospho-L-seryl-[protein] + ADP + H(+). It carries out the reaction L-threonyl-[protein] + ATP = O-phospho-L-threonyl-[protein] + ADP + H(+). It catalyses the reaction ATP + H2O = ADP + phosphate + H(+). Its function is as follows. Actin-dependent motor protein with a protein kinase activity, playing an essential role in hearing. Probably plays also a role in vision. Required for normal cochlear hair bundle development and hearing. Plays an important role in the early steps of cochlear hair bundle morphogenesis. Influences the number and lengths of stereocilia to be produced and limits the growth of microvilli within the forming auditory hair bundles thereby contributing to the architecture of the hair bundle, including its staircase pattern. Involved in the elongation of actin in stereocilia tips by transporting the actin regulatory factor ESPN to the plus ends of actin filaments. The polypeptide is Myosin-IIIa (Myo3a) (Mus musculus (Mouse)).